Here is a 153-residue protein sequence, read N- to C-terminus: Aspartate carbamoyltransferase regulatory chain (153 aa).

Positions 109, 114, 138, and 141 each coordinate Zn(2+).

It belongs to the PyrI family. As to quaternary structure, contains catalytic and regulatory chains. It depends on Zn(2+) as a cofactor.

Functionally, involved in allosteric regulation of aspartate carbamoyltransferase. This is Aspartate carbamoyltransferase regulatory chain from Vibrio vulnificus (strain CMCP6).